The primary structure comprises 176 residues: RNA pyrophosphohydrolase (176 aa).

The Nudix hydrolase domain maps to 6–149 (GYRPNVGIVI…KRDVYRRVMK (144 aa)). A Nudix box motif is present at residues 38–59 (GGINPGESAEQAMYRELFEEVG).

The protein belongs to the Nudix hydrolase family. RppH subfamily. A divalent metal cation is required as a cofactor.

Its function is as follows. Accelerates the degradation of transcripts by removing pyrophosphate from the 5'-end of triphosphorylated RNA, leading to a more labile monophosphorylated state that can stimulate subsequent ribonuclease cleavage. This chain is RNA pyrophosphohydrolase, found in Salmonella arizonae (strain ATCC BAA-731 / CDC346-86 / RSK2980).